We begin with the raw amino-acid sequence, 878 residues long: Alanine--tRNA ligase (878 aa).

Zn(2+)-binding residues include histidine 565, histidine 569, cysteine 667, and histidine 671.

The protein belongs to the class-II aminoacyl-tRNA synthetase family. Zn(2+) is required as a cofactor.

Its subcellular location is the cytoplasm. It carries out the reaction tRNA(Ala) + L-alanine + ATP = L-alanyl-tRNA(Ala) + AMP + diphosphate. In terms of biological role, catalyzes the attachment of alanine to tRNA(Ala) in a two-step reaction: alanine is first activated by ATP to form Ala-AMP and then transferred to the acceptor end of tRNA(Ala). Also edits incorrectly charged Ser-tRNA(Ala) and Gly-tRNA(Ala) via its editing domain. This Desulforamulus reducens (strain ATCC BAA-1160 / DSM 100696 / MI-1) (Desulfotomaculum reducens) protein is Alanine--tRNA ligase.